A 1299-amino-acid polypeptide reads, in one-letter code: DNA-directed RNA polymerase subunit beta' (1299 aa).

The Zn(2+) site is built by Cys60, Cys62, Cys75, and Cys78. The tract at residues 385–405 is disordered; it reads GRRGRPVTGPGNRPLKSLSDM. Mg(2+)-binding residues include Asp535, Asp537, and Asp539. Zn(2+)-binding residues include Cys886, Cys962, Cys969, and Cys972.

The protein belongs to the RNA polymerase beta' chain family. In terms of assembly, the RNAP catalytic core consists of 2 alpha, 1 beta, 1 beta' and 1 omega subunit. When a sigma factor is associated with the core the holoenzyme is formed, which can initiate transcription. It depends on Mg(2+) as a cofactor. Zn(2+) serves as cofactor.

The enzyme catalyses RNA(n) + a ribonucleoside 5'-triphosphate = RNA(n+1) + diphosphate. In terms of biological role, DNA-dependent RNA polymerase catalyzes the transcription of DNA into RNA using the four ribonucleoside triphosphates as substrates. The sequence is that of DNA-directed RNA polymerase subunit beta' from Streptomyces coelicolor (strain ATCC BAA-471 / A3(2) / M145).